The following is a 61-amino-acid chain: Small ribosomal subunit protein uS14 (61 aa).

Residues C24, C27, C40, and C43 each coordinate Zn(2+).

This sequence belongs to the universal ribosomal protein uS14 family. Zinc-binding uS14 subfamily. As to quaternary structure, part of the 30S ribosomal subunit. Contacts proteins S3 and S10. Requires Zn(2+) as cofactor.

Its function is as follows. Binds 16S rRNA, required for the assembly of 30S particles and may also be responsible for determining the conformation of the 16S rRNA at the A site. This is Small ribosomal subunit protein uS14 from Acidithiobacillus ferrooxidans (strain ATCC 23270 / DSM 14882 / CIP 104768 / NCIMB 8455) (Ferrobacillus ferrooxidans (strain ATCC 23270)).